The chain runs to 253 residues: Kojic acid related protein 1 (253 aa).

The next 3 helical transmembrane spans lie at 23 to 43 (PIKF…FILI), 53 to 73 (IFYP…YIVS), and 117 to 137 (ALFG…IVSV). The interval 174 to 253 (FPMMSPALPS…PPPPKKAAKV (80 aa)) is disordered. Polar residues-rich tracts occupy residues 184 to 200 (GGTT…SPEF) and 226 to 240 (QQES…NQPQ). Pro residues predominate over residues 242 to 253 (YFPPPPKKAAKV).

The protein resides in the membrane. Functionally, involved in mycelium growth and repression of conidia formation by affecting the expression of brlA and abaA. Acts as a negative regulation factor for kojic acid production through affecting the expression of kojA, kojR and kojT. This Aspergillus oryzae (strain ATCC 42149 / RIB 40) (Yellow koji mold) protein is Kojic acid related protein 1.